Reading from the N-terminus, the 209-residue chain is Segregation and condensation protein B (209 aa).

Belongs to the ScpB family. In terms of assembly, homodimer. Homodimerization may be required to stabilize the binding of ScpA to the Smc head domains. Component of a cohesin-like complex composed of ScpA, ScpB and the Smc homodimer, in which ScpA and ScpB bind to the head domain of Smc. The presence of the three proteins is required for the association of the complex with DNA.

It is found in the cytoplasm. In terms of biological role, participates in chromosomal partition during cell division. May act via the formation of a condensin-like complex containing Smc and ScpA that pull DNA away from mid-cell into both cell halves. The protein is Segregation and condensation protein B of Geobacillus thermodenitrificans (strain NG80-2).